Consider the following 218-residue polypeptide: Octanoyltransferase (218 aa).

Residues 32–214 enclose the BPL/LPL catalytic domain; sequence VLTADEIWLV…HFTQLLGYND (183 aa). Residues 71-78, 143-145, and 156-158 contribute to the substrate site; these read RGGQITYH, SLG, and GLA. Catalysis depends on C174, which acts as the Acyl-thioester intermediate.

Belongs to the LipB family.

The protein resides in the cytoplasm. The catalysed reaction is octanoyl-[ACP] + L-lysyl-[protein] = N(6)-octanoyl-L-lysyl-[protein] + holo-[ACP] + H(+). It participates in protein modification; protein lipoylation via endogenous pathway; protein N(6)-(lipoyl)lysine from octanoyl-[acyl-carrier-protein]: step 1/2. Catalyzes the transfer of endogenously produced octanoic acid from octanoyl-acyl-carrier-protein onto the lipoyl domains of lipoate-dependent enzymes. Lipoyl-ACP can also act as a substrate although octanoyl-ACP is likely to be the physiological substrate. This is Octanoyltransferase from Histophilus somni (strain 2336) (Haemophilus somnus).